The following is an 88-amino-acid chain: UPF0297 protein Cphy_2298 (88 aa).

Belongs to the UPF0297 family.

The sequence is that of UPF0297 protein Cphy_2298 from Lachnoclostridium phytofermentans (strain ATCC 700394 / DSM 18823 / ISDg) (Clostridium phytofermentans).